A 173-amino-acid chain; its full sequence is Probable WRKY transcription factor 50 (173 aa).

The segment at residues 107–172 is a DNA-binding region (WRKY); the sequence is SEVEVLDDGF…YEGSHNHSSM (66 aa).

It belongs to the WRKY group II-c family.

Its subcellular location is the nucleus. Transcription factor. Interacts specifically with the W box (5'-(T)TGAC[CT]-3'), a frequently occurring elicitor-responsive cis-acting element. In Arabidopsis thaliana (Mouse-ear cress), this protein is Probable WRKY transcription factor 50 (WRKY50).